The sequence spans 1489 residues: DEAD-box ATP-dependent DNA helicase Fancm (1489 aa).

A Helicase ATP-binding domain is found at 65–237 (IVQSALFKNT…AVCRNLYISN (173 aa)). Residue 78–85 (LPTGLGKT) participates in ATP binding. Positions 185–188 (DEAH) match the DEAH box motif. Positions 418 to 584 (KLRQVLVQHF…VVKLSLYEQN (167 aa)) constitute a Helicase C-terminal domain. Disordered regions lie at residues 591–647 (KFQP…ESQQ), 980–1000 (VEES…ESNH), 1145–1182 (TETI…PQGK), 1196–1222 (VLPC…SIQE), 1255–1293 (NPTI…PQIA), and 1452–1489 (ERRK…VLID). Residues 594-610 (PKCEEKHMEPVAEEKPK) show a composition bias toward basic and acidic residues. The segment covering 611–625 (PKSAAKTKESRKRKQ) has biased composition (basic residues). Residues 985 to 998 (RSTPISIADSSGES) show a composition bias toward polar residues. A compositionally biased stretch (basic and acidic residues) spans 1149-1161 (KNSENKNSHEDGS). Acidic residues predominate over residues 1480–1489 (SDEDDVVLID).

This sequence belongs to the DEAD box helicase family. DEAH subfamily. FANCM sub-subfamily.

Its subcellular location is the nucleus. It carries out the reaction ATP + H2O = ADP + phosphate + H(+). It catalyses the reaction Couples ATP hydrolysis with the unwinding of duplex DNA by translocating in the 3'-5' direction.. In terms of biological role, a ssDNA-dependent ATPase with 3' to 5' helicase activity. Involved in multiple DNA-damage responses, some that require ATPase and helicase activity and some that are independent of these. Involved in DNA interstrand cross-link repair, probably together with Fancl and other Fanconi anemia pathway homologs. Independent of Fancl involved in DNA double strand break repair, including contributing to the synthesis-dependent strand annealing (SDSA) pathway. Probably contributes to SDSA by unwinding short duplex regions in complex D-loop-like DNA structures. This is DEAD-box ATP-dependent DNA helicase Fancm from Drosophila melanogaster (Fruit fly).